A 99-amino-acid chain; its full sequence is Integration host factor subunit alpha (99 aa).

The protein belongs to the bacterial histone-like protein family. Heterodimer of an alpha and a beta chain.

This protein is one of the two subunits of integration host factor, a specific DNA-binding protein that functions in genetic recombination as well as in transcriptional and translational control. The chain is Integration host factor subunit alpha from Anaeromyxobacter sp. (strain Fw109-5).